Here is a 215-residue protein sequence, read N- to C-terminus: Peroxiredoxin 1 (215 aa).

A Thioredoxin domain is found at Lys-2–Thr-157. Cys-44 serves as the catalytic Cysteine sulfenic acid (-SOH) intermediate. A substrate-binding site is contributed by Arg-120.

It belongs to the peroxiredoxin family. Prx6 subfamily. Homodecamer. Pentamer of dimers that assemble into a ring structure.

The protein resides in the cytoplasm. It carries out the reaction a hydroperoxide + [thioredoxin]-dithiol = an alcohol + [thioredoxin]-disulfide + H2O. Functionally, thiol-specific peroxidase that catalyzes the reduction of hydrogen peroxide and organic hydroperoxides to water and alcohols, respectively. Plays a role in cell protection against oxidative stress by detoxifying peroxides. In Caldanaerobacter subterraneus subsp. tengcongensis (strain DSM 15242 / JCM 11007 / NBRC 100824 / MB4) (Thermoanaerobacter tengcongensis), this protein is Peroxiredoxin 1.